Reading from the N-terminus, the 242-residue chain is Pyridoxine 5'-phosphate synthase (242 aa).

N7 is a 3-amino-2-oxopropyl phosphate binding site. 1-deoxy-D-xylulose 5-phosphate is bound at residue 9-10 (DH). A 3-amino-2-oxopropyl phosphate-binding site is contributed by R18. Residue H43 is the Proton acceptor of the active site. 1-deoxy-D-xylulose 5-phosphate contacts are provided by R45 and H50. E70 functions as the Proton acceptor in the catalytic mechanism. Residue T100 participates in 1-deoxy-D-xylulose 5-phosphate binding. The active-site Proton donor is the H190. 3-amino-2-oxopropyl phosphate contacts are provided by residues G191 and 212-213 (GH).

It belongs to the PNP synthase family. Homooctamer; tetramer of dimers.

It is found in the cytoplasm. The enzyme catalyses 3-amino-2-oxopropyl phosphate + 1-deoxy-D-xylulose 5-phosphate = pyridoxine 5'-phosphate + phosphate + 2 H2O + H(+). Its pathway is cofactor biosynthesis; pyridoxine 5'-phosphate biosynthesis; pyridoxine 5'-phosphate from D-erythrose 4-phosphate: step 5/5. Functionally, catalyzes the complicated ring closure reaction between the two acyclic compounds 1-deoxy-D-xylulose-5-phosphate (DXP) and 3-amino-2-oxopropyl phosphate (1-amino-acetone-3-phosphate or AAP) to form pyridoxine 5'-phosphate (PNP) and inorganic phosphate. In Thermodesulfovibrio yellowstonii (strain ATCC 51303 / DSM 11347 / YP87), this protein is Pyridoxine 5'-phosphate synthase.